The following is a 497-amino-acid chain: Ankyrin repeat domain-containing protein 53 (497 aa).

The span at 1-10 (MRRPSRRRSK) shows a compositional bias: basic residues. Residues 1-65 (MRRPSRRRSK…VSSPNSESSQ (65 aa)) are disordered. Residues 12 to 27 (STPPRSHTTPRRTGPS) show a composition bias toward low complexity. Positions 28 to 39 (DSRRRPGTKEQP) are enriched in basic and acidic residues. ANK repeat units follow at residues 110–140 (KGFT…PVDL), 144–177 (KGQT…AINS), and 181–210 (NGST…NVHA). A coiled-coil region spans residues 239–264 (WKHDKKVLAQEMEKLRTLKEKLTILE).

Interacts with PSRC1; recruited by PSRC1 to the spindle during mitosis. In terms of processing, phosphorylated during mitosis.

It is found in the cytoplasm. The protein resides in the cytoskeleton. It localises to the spindle. The protein localises to the spindle pole. Required for normal progression through mitosis. Involved in chromosome alignment and cytokinesis via regulation of microtubules polymerization. This Mus musculus (Mouse) protein is Ankyrin repeat domain-containing protein 53 (Ankrd53).